A 252-amino-acid polypeptide reads, in one-letter code: MSGHSKWATTKHKKAVIDARRGKLFAKLIKNIEVAARTGGGDPAGNPTLYDAIQKAKKTSVPNDNIDRAVKRGAGLEAGGADYQTIMYEGYAPGGVAVLVECLTDNRNRAASDVRVAFTRNGGSLADPGSVSYLFSRRGVVVVPKTDGLDEDDVLGAVLDAGAEEVNDLGEAFEVLSEATDLVAVRTALQDAGLDYDSAEAQFVPATQIEVDVDGARKVLRLIDALEDSDDVQNVFANFDATDEVLAQLDED.

It belongs to the TACO1 family.

It localises to the cytoplasm. This Beutenbergia cavernae (strain ATCC BAA-8 / DSM 12333 / CCUG 43141 / JCM 11478 / NBRC 16432 / NCIMB 13614 / HKI 0122) protein is Probable transcriptional regulatory protein Bcav_1989.